Reading from the N-terminus, the 282-residue chain is NAD(P)H-hydrate epimerase (282 aa).

Residues 1–53 (MSGLRTLLGLGLLVAGSRLPRIASRQSVCRAGPIWWGTQHRSSETMASAAVKY) constitute a mitochondrion transit peptide. Residues 59 to 269 (AQAVDEELFN…ALEKKYQLNL (211 aa)) form the YjeF N-terminal domain. Residue 113–117 (NNGGD) participates in (6S)-NADPHX binding. Residue asparagine 114 participates in K(+) binding. Residue lysine 138 is modified to N6-succinyllysine. Aspartate 179 is a binding site for K(+). (6S)-NADPHX-binding positions include 183 to 189 (GFSFKGD) and aspartate 212. Serine 215 provides a ligand contact to K(+).

The protein belongs to the NnrE/AIBP family. Homodimer. Interacts with APOA1 and APOA2. It depends on K(+) as a cofactor. In terms of processing, undergoes physiological phosphorylation during sperm capacitation, downstream to PKA activation.

The protein resides in the mitochondrion. Its subcellular location is the secreted. The enzyme catalyses (6R)-NADHX = (6S)-NADHX. The catalysed reaction is (6R)-NADPHX = (6S)-NADPHX. Catalyzes the epimerization of the S- and R-forms of NAD(P)HX, a damaged form of NAD(P)H that is a result of enzymatic or heat-dependent hydration. This is a prerequisite for the S-specific NAD(P)H-hydrate dehydratase to allow the repair of both epimers of NAD(P)HX. Accelerates cholesterol efflux from endothelial cells to high-density lipoprotein (HDL) and thereby regulates angiogenesis. The protein is NAD(P)H-hydrate epimerase of Rattus norvegicus (Rat).